The sequence spans 88 residues: Small ribosomal subunit protein bS20 (88 aa).

The interval 1 to 20 (MANTKSARKSLIKSKQQRKC) is disordered.

This sequence belongs to the bacterial ribosomal protein bS20 family.

Functionally, binds directly to 16S ribosomal RNA. This Blochmanniella pennsylvanica (strain BPEN) protein is Small ribosomal subunit protein bS20.